A 260-amino-acid polypeptide reads, in one-letter code: tRNA pseudouridine synthase C (260 aa).

The active site involves Asp-54.

It belongs to the pseudouridine synthase RluA family.

The catalysed reaction is uridine(65) in tRNA = pseudouridine(65) in tRNA. In terms of biological role, responsible for synthesis of pseudouridine from uracil-65 in transfer RNAs. The chain is tRNA pseudouridine synthase C (truC) from Escherichia coli (strain K12).